Consider the following 592-residue polypeptide: V-type ATP synthase alpha chain (592 aa).

An ATP-binding site is contributed by glycine 232 to threonine 239.

The protein belongs to the ATPase alpha/beta chains family.

It catalyses the reaction ATP + H2O + 4 H(+)(in) = ADP + phosphate + 5 H(+)(out). In terms of biological role, produces ATP from ADP in the presence of a proton gradient across the membrane. The V-type alpha chain is a catalytic subunit. In Clostridioides difficile (strain 630) (Peptoclostridium difficile), this protein is V-type ATP synthase alpha chain.